Here is a 78-residue protein sequence, read N- to C-terminus: MTRHLIFAAMLLVCLFVCWNAVGARDARSAFSLEETAQDEHVMEERVFINPAGNREKNACLENCKSLPNCKNYEFCSK.

The N-terminal stretch at 1–24 is a signal peptide; that stretch reads MTRHLIFAAMLLVCLFVCWNAVGA. The propeptide occupies 25 to 28; that stretch reads RDAR.

Belongs to the scoloptoxin-04 family. In terms of processing, contains 2 disulfide bonds. In terms of tissue distribution, expressed by the venom gland.

The protein resides in the secreted. The protein is U-scoloptoxin(04)-Er1e of Ethmostigmus rubripes (Giant centipede).